A 343-amino-acid polypeptide reads, in one-letter code: Probable dual-specificity RNA methyltransferase RlmN (343 aa).

The active-site Proton acceptor is the E91. The Radical SAM core domain occupies 97–326 (HPDRITACIS…AEIRREKGTD (230 aa)). A disulfide bond links C104 and C331. The [4Fe-4S] cluster site is built by C111, C115, and C118. S-adenosyl-L-methionine is bound by residues 158–159 (GE), S190, 213–215 (SLH), and N289. Catalysis depends on C331, which acts as the S-methylcysteine intermediate.

It belongs to the radical SAM superfamily. RlmN family. The cofactor is [4Fe-4S] cluster.

It localises to the cytoplasm. It carries out the reaction adenosine(2503) in 23S rRNA + 2 reduced [2Fe-2S]-[ferredoxin] + 2 S-adenosyl-L-methionine = 2-methyladenosine(2503) in 23S rRNA + 5'-deoxyadenosine + L-methionine + 2 oxidized [2Fe-2S]-[ferredoxin] + S-adenosyl-L-homocysteine. The enzyme catalyses adenosine(37) in tRNA + 2 reduced [2Fe-2S]-[ferredoxin] + 2 S-adenosyl-L-methionine = 2-methyladenosine(37) in tRNA + 5'-deoxyadenosine + L-methionine + 2 oxidized [2Fe-2S]-[ferredoxin] + S-adenosyl-L-homocysteine. Specifically methylates position 2 of adenine 2503 in 23S rRNA and position 2 of adenine 37 in tRNAs. The polypeptide is Probable dual-specificity RNA methyltransferase RlmN (Thermotoga maritima (strain ATCC 43589 / DSM 3109 / JCM 10099 / NBRC 100826 / MSB8)).